We begin with the raw amino-acid sequence, 355 residues long: Probable protein phosphatase 2C 21 (355 aa).

Residues 23–329 (RFGLSSMQGW…DNMTIILVQF (307 aa)) form the PPM-type phosphatase domain. The Mn(2+) site is built by aspartate 57, glycine 58, aspartate 272, and aspartate 320. The segment at 329–355 (FKKPNPSETEPEDSKPEPSEDEPSSSS) is disordered.

Belongs to the PP2C family. Requires Mg(2+) as cofactor. Mn(2+) serves as cofactor.

It catalyses the reaction O-phospho-L-seryl-[protein] + H2O = L-seryl-[protein] + phosphate. The enzyme catalyses O-phospho-L-threonyl-[protein] + H2O = L-threonyl-[protein] + phosphate. This Arabidopsis thaliana (Mouse-ear cress) protein is Probable protein phosphatase 2C 21 (PPC4-2).